A 305-amino-acid polypeptide reads, in one-letter code: Pseudouridine-5'-phosphate glycosidase (305 aa).

E28 serves as the catalytic Proton donor. Positions 89 and 109 each coordinate substrate. Residue D141 coordinates Mn(2+). 143–145 (SAD) serves as a coordination point for substrate. K162 functions as the Nucleophile in the catalytic mechanism.

Belongs to the pseudouridine-5'-phosphate glycosidase family. As to quaternary structure, homotrimer. Mn(2+) is required as a cofactor.

It catalyses the reaction D-ribose 5-phosphate + uracil = psi-UMP + H2O. Functionally, catalyzes the reversible cleavage of pseudouridine 5'-phosphate (PsiMP) to ribose 5-phosphate and uracil. Functions biologically in the cleavage direction, as part of a pseudouridine degradation pathway. This chain is Pseudouridine-5'-phosphate glycosidase, found in Dinoroseobacter shibae (strain DSM 16493 / NCIMB 14021 / DFL 12).